The following is a 357-amino-acid chain: Thymidine kinase (357 aa).

Residue 17 to 24 coordinates ATP; it reads GAHGLGKT. E45 serves as the catalytic Proton acceptor. Residue R186 participates in ATP binding. R192 lines the substrate pocket.

This sequence belongs to the herpesviridae thymidine kinase family. Homodimer.

It carries out the reaction thymidine + ATP = dTMP + ADP + H(+). Catalyzes the transfer of the gamma-phospho group of ATP to thymidine to generate dTMP in the salvage pathway of pyrimidine synthesis. The dTMP serves as a substrate for DNA polymerase during viral DNA replication. Allows the virus to be reactivated and to grow in non-proliferative cells lacking a high concentration of phosphorylated nucleic acid precursors. The chain is Thymidine kinase from Bovine herpesvirus 1 (strain 6660) (BoHV-1).